The primary structure comprises 228 residues: Pyridoxal phosphate homeostasis protein (228 aa).

Lys35 is modified (N6-(pyridoxal phosphate)lysine).

This sequence belongs to the pyridoxal phosphate-binding protein YggS/PROSC family.

Functionally, pyridoxal 5'-phosphate (PLP)-binding protein, which is involved in PLP homeostasis. This chain is Pyridoxal phosphate homeostasis protein, found in Aquifex aeolicus (strain VF5).